A 587-amino-acid chain; its full sequence is MEQGGGGGGNEVVEEASPISSRPPANNLEELMRFSAAADDGGLGGGGGGGGGGSASSSSGNRWPREETLALLRIRSDMDSTFRDATLKAPLWEHVSRKLLELGYKRSSKKCKEKFENVQKYYKRTKETRGGRHDGKAYKFFSQLEALNTTPPSSSLDVTPLSVANPILMPSSSSSPFPVFSQPQPQTQTQPPQTHNVSFTPTPPPLPLPSMGPIFTGVTFSSHSSSTASGMGSDDDDDDMDVDQANIAGSSSRKRKRGNRGGGGKMMELFEGLVRQVMQKQAAMQRSFLEALEKREQERLDREEAWKRQEMARLAREHEVMSQERAASASRDAAIISLIQKITGHTIQLPPSLSSQPPPPYQPPPAVTKRVAEPPLSTAQSQSQQPIMAIPQQQILPPPPPSHPHAHQPEQKQQQQPQQEMVMSSEQSSLPSSSRWPKAEILALINLRSGMEPRYQDNVPKGLLWEEISTSMKRMGYNRNAKRCKEKWENINKYYKKVKESNKKRPQDAKTCPYFHRLDLLYRNKVLGSGGGSSTSGLPQDQKQSPVTAMKPPQEGLVNVQQTHGSASTEEEEPIEESPQGTEKKTL.

Composition is skewed to gly residues over residues 1–10 (MEQGGGGGGN) and 41–54 (GGLGGGGGGGGGGS). The segment at 1–63 (MEQGGGGGGN…SASSSSGNRW (63 aa)) is disordered. The Myb-like 1 domain occupies 55–119 (ASSSSGNRWP…KCKEKFENVQ (65 aa)). Positions 96–103 (SRKLLELG) match the Nuclear localization signal 1 motif. The segment covering 173–194 (SSSPFPVFSQPQPQTQTQPPQT) has biased composition (low complexity). The segment at 173-264 (SSSPFPVFSQ…RKRGNRGGGG (92 aa)) is disordered. The segment covering 201 to 210 (PTPPPLPLPS) has biased composition (pro residues). A compositionally biased stretch (low complexity) spans 221-232 (SSHSSSTASGMG). Positions 233 to 242 (SDDDDDDMDV) are enriched in acidic residues. Residues 285-328 (QRSFLEALEKREQERLDREEAWKRQEMARLAREHEVMSQERAAS) adopt a coiled-coil conformation. Positions 348-435 (QLPPSLSSQP…EQSSLPSSSR (88 aa)) are disordered. Residues 356-366 (QPPPPYQPPPA) show a composition bias toward pro residues. Composition is skewed to low complexity over residues 379-395 (AQSQSQQPIMAIPQQQI) and 411-434 (QKQQQQPQQEMVMSSEQSSLPSSS). Residues 434-492 (SRWPKAEILALINLRSGMEPRYQDNVPKGLLWEEISTSMKRMGYNRNAKRCKEKWENIN) form the Myb-like 2 domain. The short motif at 472-479 (MKRMGYNR) is the Nuclear localization signal 2 element. The disordered stretch occupies residues 530–587 (GGGSSTSGLPQDQKQSPVTAMKPPQEGLVNVQQTHGSASTEEEEPIEESPQGTEKKTL). Composition is skewed to polar residues over residues 538–547 (LPQDQKQSPV) and 559–568 (NVQQTHGSAS).

As to expression, mostly expressed in siliques, and, to a lower extent, in growing root hairs, leaves, stems, and flowers. Present in abaxial epidermal cells, predominantly in guard cells, pavement cells, and meristemoids.

The protein localises to the nucleus. Functionally, transcription repressor that binds specific DNA sequence such as GT3 box 5'-GGTAAA-3' in the SDD1 promoter. Negative regulator of water use efficiency (WUE) via the promotion of stomatal density and distribution by the transcription repression of SDD1. Regulates the expression of several cell cycle genes and endoreduplication, especially in trichomes where it prevents ploidy-dependent plant cell growth. Regulates negatively root hair growth by directly binding RSL4 promoter and repressing RSL4 expression. This Arabidopsis thaliana (Mouse-ear cress) protein is Trihelix transcription factor GTL1.